Consider the following 482-residue polypeptide: Probable 2-carboxy-D-arabinitol-1-phosphatase (482 aa).

A chloroplast-targeting transit peptide spans 1 to 34; the sequence is MISLPLTTPILPSRCLLHKTRRQNSTRRRLLIRS. Catalysis depends on H55, which acts as the Tele-phosphohistidine intermediate. Catalysis depends on E129, which acts as the Proton donor/acceptor.

The protein belongs to the phosphoglycerate mutase family.

The protein resides in the plastid. Its subcellular location is the chloroplast stroma. The enzyme catalyses 2-carboxy-D-arabinitol 1-phosphate + H2O = 2-carboxy-D-arabinitol + phosphate. Its function is as follows. Phosphoglycerate mutase-like protein lacking PGM activity, but having 2-carboxy-D-arabinitol 1-phosphate (CA1P) phosphatase activity. Prevents the accumulation of D-glycero-2,3-pentodiulose-1,5-bisphosphate (PDBP) a potent inhibitor of ribulose-1,5-bisphosphate carboxylase (RuBisCO). PDBP is produced during the oxidation of ribulose-1,5-bisphosphate, the substrate of RuBisCO. The polypeptide is Probable 2-carboxy-D-arabinitol-1-phosphatase (Arabidopsis thaliana (Mouse-ear cress)).